The primary structure comprises 697 residues: Heat shock protein homolog SSE1 (697 aa).

Positions 664-674 (EMAEKLAAQRA) are enriched in low complexity. Positions 664 to 697 (EMAEKLAAQRAAEQKAQESKAESDKDAEGDIDLD) are disordered. Residues 675-691 (AEQKAQESKAESDKDAE) are compositionally biased toward basic and acidic residues.

It belongs to the heat shock protein 70 family.

Its subcellular location is the cytoplasm. The chain is Heat shock protein homolog SSE1 (SSE1) from Eremothecium gossypii (strain ATCC 10895 / CBS 109.51 / FGSC 9923 / NRRL Y-1056) (Yeast).